We begin with the raw amino-acid sequence, 376 residues long: Chaperone protein DnaJ (376 aa).

Positions 4-70 (DYYQILGVSK…QKRAAYDRFG (67 aa)) constitute a J domain. Residues 139–217 (GVEKNISFSS…CHGLGRYHKQ (79 aa)) form a CR-type zinc finger. Residues C152, C155, C169, C172, C191, C194, C205, and C208 each contribute to the Zn(2+) site. CXXCXGXG motif repeat units lie at residues 152-159 (CDTCHGSG), 169-176 (CDACGGVG), 191-198 (CHKCQGNG), and 205-212 (CKKCHGLG).

It belongs to the DnaJ family. Homodimer. Zn(2+) is required as a cofactor.

It is found in the cytoplasm. Its function is as follows. Participates actively in the response to hyperosmotic and heat shock by preventing the aggregation of stress-denatured proteins and by disaggregating proteins, also in an autonomous, DnaK-independent fashion. Unfolded proteins bind initially to DnaJ; upon interaction with the DnaJ-bound protein, DnaK hydrolyzes its bound ATP, resulting in the formation of a stable complex. GrpE releases ADP from DnaK; ATP binding to DnaK triggers the release of the substrate protein, thus completing the reaction cycle. Several rounds of ATP-dependent interactions between DnaJ, DnaK and GrpE are required for fully efficient folding. Also involved, together with DnaK and GrpE, in the DNA replication of plasmids through activation of initiation proteins. This chain is Chaperone protein DnaJ, found in Rickettsia bellii (strain OSU 85-389).